Here is a 568-residue protein sequence, read N- to C-terminus: Sphingosine-1-phosphate lyase 1 (568 aa).

Residues 1 to 40 (MPGTDLLKLKDFEPYLEILESYSTKAKNYVNGYCTKYEPW) lie on the Lumenal side of the membrane. A helical; Signal-anchor for type III membrane protein transmembrane segment spans residues 41 to 61 (QLIAWSVLCTLLIVWVYELIF). The Cytoplasmic portion of the chain corresponds to 62-568 (QPESLWSRFK…NQMNGSPKPR (507 aa)). At Lys353 the chain carries N6-(pyridoxal phosphate)lysine; alternate. Lys353 carries the N6-acetyllysine; alternate modification. A 3'-nitrotyrosine mark is found at Tyr356 and Tyr366. At Ser564 the chain carries Phosphoserine.

Belongs to the group II decarboxylase family. Sphingosine-1-phosphate lyase subfamily. Pyridoxal 5'-phosphate is required as a cofactor. As to expression, highest levels are found in liver, small intestine and thymus, followed by kidney, lung, heart, spleen and brain (at protein level). Also detected in stomach, testis and skeletal muscle (at protein level).

It localises to the endoplasmic reticulum membrane. It carries out the reaction sphinganine 1-phosphate = hexadecanal + phosphoethanolamine. It catalyses the reaction sphing-4-enine 1-phosphate = (2E)-hexadecenal + phosphoethanolamine. It participates in lipid metabolism; sphingolipid metabolism. Cleaves phosphorylated sphingoid bases (PSBs), such as sphingosine-1-phosphate, into fatty aldehydes and phosphoethanolamine. Elevates stress-induced ceramide production and apoptosis. Required for global lipid homeostasis in liver and cholesterol homeostasis in fibroblasts. Involved in the regulation of pro-inflammatory response and neutrophil trafficking. Modulates neuronal autophagy via phosphoethanolamine production which regulates accumulation of aggregate-prone proteins such as APP. Seems to play a role in establishing neuronal contact sites and axonal maintenance. The protein is Sphingosine-1-phosphate lyase 1 of Mus musculus (Mouse).